Consider the following 390-residue polypeptide: Phosphoglycerate kinase (390 aa).

Substrate contacts are provided by residues 21–23 (DMN), Arg36, 59–62 (HLGR), Arg113, and Arg146. ATP-binding positions include Lys197, Glu319, and 345–348 (GGDT).

The protein belongs to the phosphoglycerate kinase family. Monomer.

The protein resides in the cytoplasm. The catalysed reaction is (2R)-3-phosphoglycerate + ATP = (2R)-3-phospho-glyceroyl phosphate + ADP. It functions in the pathway carbohydrate degradation; glycolysis; pyruvate from D-glyceraldehyde 3-phosphate: step 2/5. The sequence is that of Phosphoglycerate kinase from Laribacter hongkongensis (strain HLHK9).